Here is a 702-residue protein sequence, read N- to C-terminus: Elongation factor G (702 aa).

The tr-type G domain maps to 8-290 (HRVRNIGIAA…AVAMYLPAPT (283 aa)). GTP is bound by residues 17–24 (AHIDAGKT), 87–91 (DTPGH), and 141–144 (NKMD).

It belongs to the TRAFAC class translation factor GTPase superfamily. Classic translation factor GTPase family. EF-G/EF-2 subfamily.

It localises to the cytoplasm. Functionally, catalyzes the GTP-dependent ribosomal translocation step during translation elongation. During this step, the ribosome changes from the pre-translocational (PRE) to the post-translocational (POST) state as the newly formed A-site-bound peptidyl-tRNA and P-site-bound deacylated tRNA move to the P and E sites, respectively. Catalyzes the coordinated movement of the two tRNA molecules, the mRNA and conformational changes in the ribosome. This chain is Elongation factor G, found in Aliarcobacter butzleri (strain RM4018) (Arcobacter butzleri).